Reading from the N-terminus, the 88-residue chain is Small ribosomal subunit protein bS20 (88 aa).

Residues 1-28 (MANIKSQIKRNKTNEKARLRNKAVKSSL) form a disordered region.

It belongs to the bacterial ribosomal protein bS20 family.

Binds directly to 16S ribosomal RNA. This is Small ribosomal subunit protein bS20 from Streptomyces avermitilis (strain ATCC 31267 / DSM 46492 / JCM 5070 / NBRC 14893 / NCIMB 12804 / NRRL 8165 / MA-4680).